The primary structure comprises 729 residues: 1,4-alpha-glucan branching enzyme GlgB (729 aa).

Asp-407 (nucleophile) is an active-site residue. Residue Glu-460 is the Proton donor of the active site.

Belongs to the glycosyl hydrolase 13 family. GlgB subfamily. In terms of assembly, monomer.

It carries out the reaction Transfers a segment of a (1-&gt;4)-alpha-D-glucan chain to a primary hydroxy group in a similar glucan chain.. It functions in the pathway glycan biosynthesis; glycogen biosynthesis. Functionally, catalyzes the formation of the alpha-1,6-glucosidic linkages in glycogen by scission of a 1,4-alpha-linked oligosaccharide from growing alpha-1,4-glucan chains and the subsequent attachment of the oligosaccharide to the alpha-1,6 position. The protein is 1,4-alpha-glucan branching enzyme GlgB of Pseudoalteromonas atlantica (strain T6c / ATCC BAA-1087).